Reading from the N-terminus, the 154-residue chain is NADPH-dependent 7-cyano-7-deazaguanine reductase (154 aa).

C52 functions as the Thioimide intermediate in the catalytic mechanism. D59 serves as the catalytic Proton donor. Residues 74–76 (VES) and 93–94 (HE) contribute to the substrate site.

The protein belongs to the GTP cyclohydrolase I family. QueF type 1 subfamily.

It is found in the cytoplasm. It carries out the reaction 7-aminomethyl-7-carbaguanine + 2 NADP(+) = 7-cyano-7-deazaguanine + 2 NADPH + 3 H(+). Its pathway is tRNA modification; tRNA-queuosine biosynthesis. Catalyzes the NADPH-dependent reduction of 7-cyano-7-deazaguanine (preQ0) to 7-aminomethyl-7-deazaguanine (preQ1). This is NADPH-dependent 7-cyano-7-deazaguanine reductase from Sinorhizobium medicae (strain WSM419) (Ensifer medicae).